Consider the following 323-residue polypeptide: tRNA N6-adenosine threonylcarbamoyltransferase (323 aa).

Fe cation contacts are provided by His-105, His-109, and Tyr-126. Residues 126-130 (YVSGG), Asp-158, Gly-171, Glu-175, and Asn-255 contribute to the substrate site. A Fe cation-binding site is contributed by Asp-283.

Belongs to the KAE1 / TsaD family. In terms of assembly, monomer. Component of the KEOPS complex that consists of Kae1, Bud32, Cgi121 and Pcc1; the whole complex dimerizes. The cofactor is Fe(2+).

The protein localises to the cytoplasm. The enzyme catalyses L-threonylcarbamoyladenylate + adenosine(37) in tRNA = N(6)-L-threonylcarbamoyladenosine(37) in tRNA + AMP + H(+). In terms of biological role, required for the formation of a threonylcarbamoyl group on adenosine at position 37 (t(6)A37) in tRNAs that read codons beginning with adenine. Is a component of the KEOPS complex that is probably involved in the transfer of the threonylcarbamoyl moiety of threonylcarbamoyl-AMP (TC-AMP) to the N6 group of A37. Kae1 likely plays a direct catalytic role in this reaction, but requires other protein(s) of the complex to fulfill this activity. This chain is tRNA N6-adenosine threonylcarbamoyltransferase, found in Archaeoglobus fulgidus (strain ATCC 49558 / DSM 4304 / JCM 9628 / NBRC 100126 / VC-16).